A 1103-amino-acid chain; its full sequence is Voltage-dependent calcium channel subunit alpha-2/delta-1 (1103 aa).

Residues 1-24 (MAAGCLLALTLTLFQSLLIGPSSE) form the signal peptide. Residues 25–1073 (EPFPSAVTIK…VLEDYTDCGG (1049 aa)) lie on the Extracellular side of the membrane. Residue asparagine 92 is glycosylated (N-linked (GlcNAc...) asparagine). A Phosphoserine modification is found at serine 119. N-linked (GlcNAc...) asparagine glycans are attached at residues asparagine 136 and asparagine 184. The 178-residue stretch at 253–430 (DMLILVDVSG…INTQEYLDVL (178 aa)) folds into the VWFA domain. A divalent metal cation is bound by residues aspartate 259, serine 261, and serine 263. An MIDAS-like motif motif is present at residues 259–263 (DVSGS). Residues asparagine 324, asparagine 348, asparagine 468, asparagine 475, asparagine 604, asparagine 613, asparagine 675, asparagine 781, asparagine 824, asparagine 888, asparagine 895, asparagine 985, and asparagine 998 are each glycosylated (N-linked (GlcNAc...) asparagine). Residues cysteine 404 and cysteine 1059 are joined by a disulfide bond. One can recognise a Cache domain in the interval 446 to 556 (WTNVYLDALE…NIQNPKSQEP (111 aa)). The helical transmembrane segment at 1074–1094 (VSGLNPSLWYIIGIQFLLLWL) threads the bilayer. At 1095-1103 (VSGSTHRLL) the chain is on the cytoplasmic side.

The protein belongs to the calcium channel subunit alpha-2/delta family. In terms of assembly, dimer formed of alpha-2-1 and delta-1 chains; disulfide-linked. Voltage-dependent calcium channels are multisubunit complexes, consisting of alpha-1 (CACNA1), alpha-2 (CACNA2D), beta (CACNB) and delta (CACNA2D) subunits in a 1:1:1:1 ratio. In terms of processing, proteolytically processed into subunits alpha-2-1 and delta-1 that are disulfide-linked. In terms of tissue distribution, isoform 1 is expressed in skeletal muscle. Isoform 2 is expressed in the central nervous system. Isoform 2, isoform 4 and isoform 5 are expressed in neuroblastoma cells. Isoform 3, isoform 4 and isoform 5 are expressed in the aorta.

The protein resides in the membrane. It is found in the cell membrane. Its function is as follows. The alpha-2/delta subunit of voltage-dependent calcium channels regulates calcium current density and activation/inactivation kinetics of the calcium channel. Plays an important role in excitation-contraction coupling. This is Voltage-dependent calcium channel subunit alpha-2/delta-1 (CACNA2D1) from Homo sapiens (Human).